A 500-amino-acid polypeptide reads, in one-letter code: MKVYGDKEVWLVTGSQHLYGPGVLKQVAENSQKIAAGLTESSLVSIKVVAQETVKSPGEILAVAQAANSNPNCVGLILWMHTFSPAKMWIGGLRALNKPYMHLHTQFNAELPFSDINMHFMNLNQSAHGDREFGHISTRLRQDRKVVVGHWATASVQQQIDSWCRVAMGWYESQNLKIARFGDNMRQVAVTEGDKVSAQIQFGYEVHAYGLGDLQKVVDAVTDEQVAAQIETYKKDYEVSPAIFDDEHQFQMLKNEARLELGMLKFLTDGGFGAFTNCFENLTGLTNLPGLATQRLMQQGFGYGGEGDWKTAAMVRIAKVMSKGREGGSSFMEDYTYHFGAVDQVLGAHMLEVCPSIAAAKPKLEVHLHTIGCRNDIARLIFTGKTGPALCISVIDMGTRFRMIINEVDTVNPPQELPQLPVAKALWEPRPNLEIAASAWIHAGGAHHSAYTQGITVDEAVDYAEMAGIEAVVIGADTTVRSFKTELRHNAAYYHLKDGV.

The Mn(2+) site is built by Glu-306, Glu-333, His-349, and His-448.

Belongs to the arabinose isomerase family. The cofactor is Mn(2+).

It catalyses the reaction beta-L-arabinopyranose = L-ribulose. It participates in carbohydrate degradation; L-arabinose degradation via L-ribulose; D-xylulose 5-phosphate from L-arabinose (bacterial route): step 1/3. Its function is as follows. Catalyzes the conversion of L-arabinose to L-ribulose. The sequence is that of L-arabinose isomerase from Cellvibrio japonicus (strain Ueda107) (Pseudomonas fluorescens subsp. cellulosa).